The primary structure comprises 481 residues: UDP-glycosyltransferase 73B3 (481 aa).

Catalysis depends on H21, which acts as the Proton acceptor. H21 serves as a coordination point for an anthocyanidin. D132 functions as the Charge relay in the catalytic mechanism. UDP-alpha-D-glucose contacts are provided by A355, Q357, H372, W375, N376, S377, and E380. A395 contacts an anthocyanidin. UDP-alpha-D-glucose is bound by residues E396 and Q397.

This sequence belongs to the UDP-glycosyltransferase family. As to expression, expressed in roots and flowers.

The enzyme catalyses a flavonol + UDP-alpha-D-glucose = a flavonol 3-O-beta-D-glucoside + UDP + H(+). In terms of biological role, possesses quercetin 3-O-glucosyltransferase activity in vitro. Also active in vitro on benzoates and benzoate derivatives. Involved in stress or defense responses. The polypeptide is UDP-glycosyltransferase 73B3 (UGT73B3) (Arabidopsis thaliana (Mouse-ear cress)).